We begin with the raw amino-acid sequence, 172 residues long: Large ribosomal subunit protein uL10 (172 aa).

It belongs to the universal ribosomal protein uL10 family. Part of the ribosomal stalk of the 50S ribosomal subunit. The N-terminus interacts with L11 and the large rRNA to form the base of the stalk. The C-terminus forms an elongated spine to which L12 dimers bind in a sequential fashion forming a multimeric L10(L12)X complex.

Functionally, forms part of the ribosomal stalk, playing a central role in the interaction of the ribosome with GTP-bound translation factors. The protein is Large ribosomal subunit protein uL10 (rplJ) of Liberibacter asiaticus (Citrus greening disease).